We begin with the raw amino-acid sequence, 546 residues long: Sulfite oxidase, mitochondrial (546 aa).

The N-terminal 80 residues, 1-80 (MLPRLYRSVA…YHDHRCRASQ (80 aa)), are a transit peptide targeting the mitochondrion. The Cytochrome b5 heme-binding domain occupies 83-162 (PRIYSKEDVR…LAEYKIGELN (80 aa)). Histidine 119 serves as a coordination point for heme b. Residue serine 124 is modified to Phosphoserine. Histidine 144, glutamine 146, and histidine 148 together coordinate heme b. The interval 166–175 (RMSPPLEASD) is hinge. The segment at 176–402 (PYSNDPMRHP…YSHWQRRDYK (227 aa)) is moco domain. Residues 216–220 (FTRNH), cysteine 265, aspartate 323, histidine 362, arginine 367, and 378–380 (HVK) each bind Mo-molybdopterin. Residues 403–539 (GFSPSVDWDT…RGVLSNAWHR (137 aa)) form a homodimerization region.

In terms of assembly, homodimer. Heme b serves as cofactor. The cofactor is Mo-molybdopterin.

Its subcellular location is the mitochondrion intermembrane space. The enzyme catalyses sulfite + O2 + H2O = sulfate + H2O2. Its pathway is energy metabolism; sulfur metabolism. Functionally, catalyzes the oxidation of sulfite to sulfate, the terminal reaction in the oxidative degradation of sulfur-containing amino acids. This Rattus norvegicus (Rat) protein is Sulfite oxidase, mitochondrial.